Consider the following 208-residue polypeptide: NAD(P)H-quinone oxidoreductase subunit I (208 aa).

2 consecutive 4Fe-4S ferredoxin-type domains span residues 55-84 (GRIH…VDWV) and 95-124 (RNYS…MTEE). The [4Fe-4S] cluster site is built by cysteine 64, cysteine 67, cysteine 70, cysteine 74, cysteine 104, cysteine 107, cysteine 110, and cysteine 114.

This sequence belongs to the complex I 23 kDa subunit family. NDH-1 is composed of at least 11 different subunits. Requires [4Fe-4S] cluster as cofactor.

The protein localises to the cellular thylakoid membrane. The enzyme catalyses a plastoquinone + NADH + (n+1) H(+)(in) = a plastoquinol + NAD(+) + n H(+)(out). It catalyses the reaction a plastoquinone + NADPH + (n+1) H(+)(in) = a plastoquinol + NADP(+) + n H(+)(out). Functionally, NDH-1 shuttles electrons from an unknown electron donor, via FMN and iron-sulfur (Fe-S) centers, to quinones in the respiratory and/or the photosynthetic chain. The immediate electron acceptor for the enzyme in this species is believed to be plastoquinone. Couples the redox reaction to proton translocation, and thus conserves the redox energy in a proton gradient. This Prochlorococcus marinus subsp. pastoris (strain CCMP1986 / NIES-2087 / MED4) protein is NAD(P)H-quinone oxidoreductase subunit I.